The sequence spans 374 residues: Ras-related GTP-binding protein B (374 aa).

Position 1 is an N-acetylmethionine (M1). Residues 1–15 (MEESDSEKKTEKENV) show a composition bias toward basic and acidic residues. A disordered region spans residues 1–30 (MEESDSEKKTEKENVGPKVEPPLGEPEGSL). GTP-binding residues include S49 and G50. GDP contacts are provided by G50, S51, G52, K53, T54, S55, T69, and T75. The GTP site is built by G52, K53, T54, S55, T69, T75, G126, and H188. GDP-binding residues include H188 and D191. Residue K203 forms a Glycyl lysine isopeptide (Lys-Gly) (interchain with G-Cter in ubiquitin) linkage. Residues L209 and I225 each coordinate GDP. I225 contacts GTP. Glycyl lysine isopeptide (Lys-Gly) (interchain with G-Cter in ubiquitin) cross-links involve residues K281, K291, and K305.

Belongs to the GTR/RAG GTP-binding protein family. Interacts with RRAGC and RRAGD; heterodimerization stabilizes RRAG proteins. The GTP-bound form of RRAGB (in complex with the GDP-bound form of RRAGC or RRAGD) interacts with RPTOR, thereby promoting recruitment of mTORC1 to the lysosomes. Component of the lysosomal folliculin complex (LFC), composed of FLCN, FNIP1 (or FNIP2), RagA/RRAGA or RagB/RRAGB GDP-bound, RagC/RRAGC or RagD/RRAGD GTP-bound, and Ragulator. Interacts with SH3BP4; the interaction with this negative regulator is most probably direct, preferentially occurs with the inactive GDP-bound form of RRAGB, is negatively regulated by amino acids and prevents interaction with RPTOR. Interacts with the GATOR1 complex; inactivates RRAGB. The Rag heterodimer interacts with SLC38A9; the probable amino acid sensor. Interacts with SESN1, SESN2 and SESN3.

The protein localises to the cytoplasm. It localises to the lysosome membrane. The enzyme catalyses GTP + H2O = GDP + phosphate + H(+). With respect to regulation, the activation of GTP-binding proteins is generally mediated by a guanine exchange factor (GEF), while inactivation through hydrolysis of bound GTP is catalyzed by a GTPase activating protein (GAP). The Ragulator complex functions as a GEF and promotes the active GTP-bound form. The GATOR1 complex functions as a GAP and stimulates RRAGB GTPase activity to turn it into its inactive GDP-bound form, preventing mTORC1 recruitment and activation. In terms of biological role, guanine nucleotide-binding protein that plays a crucial role in the cellular response to amino acid availability through regulation of the mTORC1 signaling cascade. Forms heterodimeric Rag complexes with RagC/RRAGC or RagD/RRAGD and cycles between an inactive GDP-bound and an active GTP-bound form: RagB/RRAGB is in its active form when GTP-bound RagB/RRAGB forms a complex with GDP-bound RagC/RRAGC (or RagD/RRAGD) and in an inactive form when GDP-bound RagB/RRAGB heterodimerizes with GTP-bound RagC/RRAGC (or RagD/RRAGD). In its GTP-bound active form, promotes the recruitment of mTORC1 to the lysosomes and its subsequent activation by the GTPase RHEB. Involved in the RCC1/Ran-GTPase pathway. This chain is Ras-related GTP-binding protein B, found in Mus musculus (Mouse).